Consider the following 260-residue polypeptide: MQFDVITLFPDMFRALTDWGITSRAAKQQRYGLRTWNPRDFTVDNYRTIDDRPYGGGPGMVMLAKPLDDAIDAAVAAQAQAGVPEPHVVLMSPQGKTLSHAKVMELAERPGLVLLCGRYEAIDQRLIDRRVDEEISLGDFVLSGGELPAMALIDAVVRHLPGVLGDAQSAVQDSFVNGLLDCPHYTRPEEYEGVRVPEILLGGHHAEIEKWRRQQALANTASKRPDLIEAARKQGLLTRADEKFLSEWAAKEGRGETPAR.

S-adenosyl-L-methionine is bound by residues G117 and 137–142 (LGDFVL).

It belongs to the RNA methyltransferase TrmD family. As to quaternary structure, homodimer.

The protein resides in the cytoplasm. The enzyme catalyses guanosine(37) in tRNA + S-adenosyl-L-methionine = N(1)-methylguanosine(37) in tRNA + S-adenosyl-L-homocysteine + H(+). Its function is as follows. Specifically methylates guanosine-37 in various tRNAs. The chain is tRNA (guanine-N(1)-)-methyltransferase from Cupriavidus necator (strain ATCC 17699 / DSM 428 / KCTC 22496 / NCIMB 10442 / H16 / Stanier 337) (Ralstonia eutropha).